The primary structure comprises 259 residues: Probable ABC transporter arginine-binding protein ArtJ (259 aa).

Residues 1-25 (MIKQIGRFFRAFIFIMPLSLTSCES) form the signal peptide. L-arginine-binding residues include Asn38, Glu45, Ala96, Gly97, Ser99, Arg104, and Phe149.

Belongs to the bacterial solute-binding protein 3 family.

It localises to the secreted. The protein localises to the cell surface. Its function is as follows. Probably part of an ABC transporter complex involved in arginine transport. Binds arginine. Interacts with host epithelial cells, suggesting a role in host-cell adhesion during infection. This Chlamydia pneumoniae (Chlamydophila pneumoniae) protein is Probable ABC transporter arginine-binding protein ArtJ.